The following is a 284-amino-acid chain: Pantothenate synthetase (284 aa).

Residue 30 to 37 (MGNLHEGH) coordinates ATP. His37 serves as the catalytic Proton donor. A (R)-pantoate-binding site is contributed by Gln61. Gln61 is a beta-alanine binding site. 149-152 (GEKD) is an ATP binding site. Gln155 serves as a coordination point for (R)-pantoate. Residues Val178 and 186 to 189 (LSSR) contribute to the ATP site.

Belongs to the pantothenate synthetase family. Homodimer.

It localises to the cytoplasm. The enzyme catalyses (R)-pantoate + beta-alanine + ATP = (R)-pantothenate + AMP + diphosphate + H(+). It participates in cofactor biosynthesis; (R)-pantothenate biosynthesis; (R)-pantothenate from (R)-pantoate and beta-alanine: step 1/1. Catalyzes the condensation of pantoate with beta-alanine in an ATP-dependent reaction via a pantoyl-adenylate intermediate. The polypeptide is Pantothenate synthetase (Yersinia pseudotuberculosis serotype O:1b (strain IP 31758)).